The chain runs to 407 residues: Lysosome-associated membrane glycoprotein 1 (407 aa).

The signal sequence occupies residues 1-21 (MAAPGARRPLLLLLLAGLAHS). A first lumenal domain region spans residues 22-189 (APALFEVKDN…SKEETRCPQD (168 aa)). Over 22 to 371 (APALFEVKDN…VEECVQDGNN (350 aa)) the chain is Lumenal. N-linked (GlcNAc...) asparagine glycosylation is found at Asn32, Asn59, Asn71, Asn79, Asn102, Asn116, Asn125, Asn145, Asn160, and Asn178. Residues Cys36 and Cys75 are joined by a disulfide bond. An intrachain disulfide couples Cys150 to Cys186. The segment at 180–211 (SKEETRCPQDQPSPTTGPPSPSPPLVPTNPSV) is disordered. Residues 190–219 (QPSPTTGPPSPSPPLVPTNPSVSKYNVTGD) are hinge. Residues 194–206 (TTGPPSPSPPLVP) show a composition bias toward pro residues. N-linked (GlcNAc...) asparagine glycosylation is found at Asn215, Asn220, Asn233, Asn241, Asn271, Asn283, Asn297, and Asn312. The segment at 220-371 (NGTCLLASMA…VEECVQDGNN (152 aa)) is second lumenal domain. Cys223 and Cys260 are disulfide-bonded. The cysteines at positions 328 and 365 are disulfide-linked. A helical membrane pass occupies residues 372 to 395 (MLIPIAVGGALAGLVLIVLIAYLI). The Cytoplasmic segment spans residues 396-407 (GRKRSHAGYQTI).

This sequence belongs to the LAMP family. In terms of assembly, interacts with ABCB9; this interaction strongly stabilizes ABCB9 and protects ABCB9 against lysosomal degradation. Interacts with FURIN. Interacts with TMEM175; inhibiting the proton channel activity of TMEM175. In terms of processing, O- and N-glycosylated; some of the N-glycans attached to LAMP-1 are polylactosaminoglycans.

It localises to the lysosome membrane. The protein resides in the endosome membrane. The protein localises to the late endosome membrane. Its subcellular location is the cell membrane. It is found in the cytolytic granule membrane. Its function is as follows. Lysosomal membrane glycoprotein which plays an important role in lysosome biogenesis, lysosomal pH regulation, autophagy and cholesterol homeostasis. Acts as an important regulator of lysosomal lumen pH regulation by acting as a direct inhibitor of the proton channel TMEM175, facilitating lysosomal acidification for optimal hydrolase activity. Also plays an important role in NK-cells cytotoxicity. Mechanistically, participates in cytotoxic granule movement to the cell surface and perforin trafficking to the lytic granule. In addition, protects NK-cells from degranulation-associated damage induced by their own cytotoxic granule content. Presents carbohydrate ligands to selectins. This is Lysosome-associated membrane glycoprotein 1 (Lamp1) from Rattus norvegicus (Rat).